The primary structure comprises 245 residues: Polynucleotide 3'-phosphatase (245 aa).

Belongs to the DNA 3' phosphatase family.

Its subcellular location is the nucleus. It carries out the reaction a 3'end (2'-deoxyribonucleotide 3'-phosphate)-DNA + H2O = a 3'-end 2'-deoxyribonucleotide-DNA + phosphate. Its function is as follows. Dephosphorylate DNA's 3'-phosphate termini. Has a role in the repair of breaks in single-stranded DNA. This chain is Polynucleotide 3'-phosphatase (TPP1), found in Saccharomyces mikatae (Yeast).